We begin with the raw amino-acid sequence, 410 residues long: UBX domain-containing protein 3 (410 aa).

Disordered stretches follow at residues 46-139 (EEDH…PDPK) and 154-212 (TISP…EKPL). A compositionally biased stretch (low complexity) spans 65–85 (GSSSGISGGDQQPPRPLQRQQ). Positions 86 to 97 (NTQGQGMKSGTA) are enriched in polar residues. Phosphoserine is present on residues Ser156, Ser167, and Ser186. A compositionally biased stretch (low complexity) spans 163 to 174 (SGPSSLASSWAS). The segment covering 183–196 (NEASGSTTPVTQSG) has biased composition (polar residues). A Phosphothreonine modification is found at Thr190. The SEP domain maps to 211–276 (PLRRTLYFWR…VQHRMDEDYV (66 aa)). Residues 334 to 410 (ENKPTTRIQV…KNASLVQKSL (77 aa)) form the UBX domain.

In terms of assembly, interacts with cdc48.

Involved in CDC48-dependent protein degradation through the ubiquitin/proteasome pathway. Involved in delivery of substrates to the 26S proteasome. Also required for membrane fusion and sporulation. This is UBX domain-containing protein 3 (ubx3) from Schizosaccharomyces pombe (strain 972 / ATCC 24843) (Fission yeast).